The sequence spans 297 residues: 4-hydroxy-tetrahydrodipicolinate synthase (297 aa).

Threonine 49 lines the pyruvate pocket. The active-site Proton donor/acceptor is the tyrosine 137. Lysine 166 serves as the catalytic Schiff-base intermediate with substrate. Isoleucine 208 contacts pyruvate.

This sequence belongs to the DapA family. In terms of assembly, homotetramer; dimer of dimers.

Its subcellular location is the cytoplasm. The enzyme catalyses L-aspartate 4-semialdehyde + pyruvate = (2S,4S)-4-hydroxy-2,3,4,5-tetrahydrodipicolinate + H2O + H(+). It functions in the pathway amino-acid biosynthesis; L-lysine biosynthesis via DAP pathway; (S)-tetrahydrodipicolinate from L-aspartate: step 3/4. Catalyzes the condensation of (S)-aspartate-beta-semialdehyde [(S)-ASA] and pyruvate to 4-hydroxy-tetrahydrodipicolinate (HTPA). The chain is 4-hydroxy-tetrahydrodipicolinate synthase from Chlorobium phaeobacteroides (strain BS1).